We begin with the raw amino-acid sequence, 479 residues long: Catalase A (479 aa).

A compositionally biased stretch (polar residues) spans 1 to 21 (MSKILTTASGAPVADNQNSRS). Residues 1–25 (MSKILTTASGAPVADNQNSRSAGPR) form a disordered region. Active-site residues include His-53 and Asn-126. Tyr-336 provides a ligand contact to heme. Residues 350 to 376 (QLPVNAPRCPVNSYQRDGSMATGSYGS) are disordered. A compositionally biased stretch (polar residues) spans 361-376 (NSYQRDGSMATGSYGS).

It belongs to the catalase family. Heme serves as cofactor.

It carries out the reaction 2 H2O2 = O2 + 2 H2O. With respect to regulation, activated by peroxide. The major expressed catalase protein in strain Corvallis in stationary phase. Decomposes hydrogen peroxide into water and oxygen; serves to protect cells from the toxic effects of hydrogen peroxide. This is Catalase A (katA) from Pseudomonas putida (Arthrobacter siderocapsulatus).